The sequence spans 295 residues: UDP-N-acetylenolpyruvoylglucosamine reductase (295 aa).

The FAD-binding PCMH-type domain occupies 24–188 (KVGGNAEIFF…LKAVFKVNKG (165 aa)). Arginine 168 is an active-site residue. Catalysis depends on serine 217, which acts as the Proton donor. The active site involves glutamate 287.

This sequence belongs to the MurB family. FAD is required as a cofactor.

The protein resides in the cytoplasm. The enzyme catalyses UDP-N-acetyl-alpha-D-muramate + NADP(+) = UDP-N-acetyl-3-O-(1-carboxyvinyl)-alpha-D-glucosamine + NADPH + H(+). It participates in cell wall biogenesis; peptidoglycan biosynthesis. Cell wall formation. This is UDP-N-acetylenolpyruvoylglucosamine reductase from Rickettsia felis (strain ATCC VR-1525 / URRWXCal2) (Rickettsia azadi).